Reading from the N-terminus, the 614-residue chain is ATP-dependent RNA helicase dbp-3 (614 aa).

The tract at residues 1–138 (MSSTKKHSRS…GTTTPAASTN (138 aa)) is disordered. The segment covering 9–36 (RSEGEEKDARLAKKVKTDETPVDGEVKK) has biased composition (basic and acidic residues). Composition is skewed to basic residues over residues 37–58 (ERKK…KSKK) and 91–109 (KKEK…KKAK). Low complexity predominate over residues 117–138 (EESTSASKATTNGTTTPAASTN). The short motif at 180 to 207 (MNFSQLPQSNLISKNPFAAYTNPTPIQS) is the Q motif element. The 185-residue stretch at 210–394 (WPFSLSGRDV…ESYMINPAQV (185 aa)) folds into the Helicase ATP-binding domain. 223 to 230 (AETGSGKT) contributes to the ATP binding site. Residues 340-343 (DEAD) carry the DEAD box motif. The Helicase C-terminal domain maps to 435–584 (RLYELLKEAQ…PVPEELLKFG (150 aa)).

Belongs to the DEAD box helicase family. DDX5/DBP2 subfamily.

It localises to the nucleus. Its subcellular location is the nucleolus. The catalysed reaction is ATP + H2O = ADP + phosphate + H(+). ATP-dependent RNA helicase required for 60S ribosomal subunit synthesis. Involved in efficient pre-rRNA processing, predominantly at site A3, which is necessary for the normal formation of 25S and 5.8S rRNAs. The chain is ATP-dependent RNA helicase dbp-3 (dbp-3) from Neurospora crassa (strain ATCC 24698 / 74-OR23-1A / CBS 708.71 / DSM 1257 / FGSC 987).